The following is a 692-amino-acid chain: Formate hydrogenlyase transcriptional activator FhlA (692 aa).

One can recognise a GAF domain in the interval 202–344 (DMDELVSEVA…QIAERVAIAV (143 aa)). The Sigma-54 factor interaction domain maps to 381–610 (IIGRSEAMYS…LENVIERAVL (230 aa)). Residues 409-416 (GETGTGKE) and 472-481 (ADKSSLFLDE) each bind ATP. The segment at residues 663–682 (PKGAAQRLGLKRTTLLSRMK) is a DNA-binding region (H-T-H motif).

Functionally, required for induction of expression of the formate dehydrogenase H and hydrogenase-3 structural genes. Also activates expression of hyf operon (encodes the silent hydrogenase-4 gene cluster). The protein is Formate hydrogenlyase transcriptional activator FhlA (fhlA) of Escherichia coli (strain K12).